Here is a 60-residue protein sequence, read N- to C-terminus: Insect toxin mu-NPTX-Nc1a (60 aa).

Positions methionine 1–alanine 19 are cleaved as a signal peptide.

Contains 4 disulfide bonds. Expressed by the venom gland.

It localises to the secreted. Insect-specific toxin. Blocks voltage-gated potassium and sodium channels. In Trichonephila clavata (Joro spider), this protein is Insect toxin mu-NPTX-Nc1a.